Reading from the N-terminus, the 382-residue chain is 8-amino-7-oxononanoate synthase (382 aa).

R26 contacts substrate. 104–105 is a pyridoxal 5'-phosphate binding site; it reads GY. A substrate-binding site is contributed by H129. Pyridoxal 5'-phosphate is bound by residues S175, 200-203, and 232-235; these read DEAH and TLSK. K235 bears the N6-(pyridoxal phosphate)lysine mark. Residue T345 coordinates substrate.

It belongs to the class-II pyridoxal-phosphate-dependent aminotransferase family. BioF subfamily. In terms of assembly, homodimer. It depends on pyridoxal 5'-phosphate as a cofactor.

It catalyses the reaction 6-carboxyhexanoyl-[ACP] + L-alanine + H(+) = (8S)-8-amino-7-oxononanoate + holo-[ACP] + CO2. It functions in the pathway cofactor biosynthesis; biotin biosynthesis. In terms of biological role, catalyzes the decarboxylative condensation of pimeloyl-[acyl-carrier protein] and L-alanine to produce 8-amino-7-oxononanoate (AON), [acyl-carrier protein], and carbon dioxide. The sequence is that of 8-amino-7-oxononanoate synthase from Mycobacterium sp. (strain JLS).